A 271-amino-acid chain; its full sequence is Small ribosomal subunit protein uS2 (271 aa).

Residues 235-271 (FDAKNPLKPQNYNAPNKRPYQDSPRKPSYQNQNQNQI) are disordered. Over residues 262–271 (SYQNQNQNQI) the composition is skewed to polar residues.

It belongs to the universal ribosomal protein uS2 family.

The chain is Small ribosomal subunit protein uS2 from Onion yellows phytoplasma (strain OY-M).